The following is a 544-amino-acid chain: Chaperonin GroEL 1 (544 aa).

Residues 29-32 (TLGP), lysine 50, 86-90 (DGTTT), glycine 414, and aspartate 494 each bind ATP.

This sequence belongs to the chaperonin (HSP60) family. In terms of assembly, forms a cylinder of 14 subunits composed of two heptameric rings stacked back-to-back. Interacts with the co-chaperonin GroES.

It is found in the cytoplasm. The enzyme catalyses ATP + H2O + a folded polypeptide = ADP + phosphate + an unfolded polypeptide.. Functionally, together with its co-chaperonin GroES, plays an essential role in assisting protein folding. The GroEL-GroES system forms a nano-cage that allows encapsulation of the non-native substrate proteins and provides a physical environment optimized to promote and accelerate protein folding. The chain is Chaperonin GroEL 1 from Psychromonas ingrahamii (strain DSM 17664 / CCUG 51855 / 37).